Consider the following 320-residue polypeptide: Ferrochelatase (320 aa).

2 residues coordinate Fe cation: His-194 and Glu-275.

It belongs to the ferrochelatase family. As to quaternary structure, monomer.

Its subcellular location is the cytoplasm. It carries out the reaction heme b + 2 H(+) = protoporphyrin IX + Fe(2+). It participates in porphyrin-containing compound metabolism; protoheme biosynthesis; protoheme from protoporphyrin-IX: step 1/1. Its function is as follows. Catalyzes the ferrous insertion into protoporphyrin IX. This chain is Ferrochelatase, found in Salmonella agona (strain SL483).